Consider the following 117-residue polypeptide: Iron-sulfur cluster insertion protein ErpA (117 aa).

Positions 45, 109, and 111 each coordinate iron-sulfur cluster.

Belongs to the HesB/IscA family. In terms of assembly, homodimer. The cofactor is iron-sulfur cluster.

Its function is as follows. Required for insertion of 4Fe-4S clusters for at least IspG. The sequence is that of Iron-sulfur cluster insertion protein ErpA from Ruthia magnifica subsp. Calyptogena magnifica.